A 310-amino-acid chain; its full sequence is HPr kinase/phosphorylase (310 aa).

Active-site residues include His-138 and Lys-159. 153–160 (GDSGIGKS) contributes to the ATP binding site. Ser-160 contributes to the Mg(2+) binding site. Asp-177 serves as the catalytic Proton acceptor; for phosphorylation activity. Proton donor; for dephosphorylation activity. Residues 201 to 210 (LEIRGVGIID) are important for the catalytic mechanism of both phosphorylation and dephosphorylation. Glu-202 serves as a coordination point for Mg(2+). Arg-243 is an active-site residue. The interval 264–269 (PVKTGR) is important for the catalytic mechanism of dephosphorylation.

The protein belongs to the HPrK/P family. Homohexamer. Mg(2+) serves as cofactor.

The catalysed reaction is [HPr protein]-L-serine + ATP = [HPr protein]-O-phospho-L-serine + ADP + H(+). It catalyses the reaction [HPr protein]-O-phospho-L-serine + phosphate + H(+) = [HPr protein]-L-serine + diphosphate. In terms of biological role, catalyzes the ATP- as well as the pyrophosphate-dependent phosphorylation of a specific serine residue in HPr, a phosphocarrier protein of the phosphoenolpyruvate-dependent sugar phosphotransferase system (PTS). HprK/P also catalyzes the pyrophosphate-producing, inorganic phosphate-dependent dephosphorylation (phosphorolysis) of seryl-phosphorylated HPr (P-Ser-HPr). The two antagonistic activities of HprK/P are regulated by several intracellular metabolites, which change their concentration in response to the absence or presence of rapidly metabolisable carbon sources (glucose, fructose, etc.) in the growth medium. Therefore, by controlling the phosphorylation state of HPr, HPrK/P is a sensor enzyme that plays a major role in the regulation of carbon metabolism and sugar transport: it mediates carbon catabolite repression (CCR), and regulates PTS-catalyzed carbohydrate uptake and inducer exclusion. This chain is HPr kinase/phosphorylase, found in Streptococcus equi subsp. equi (strain 4047).